We begin with the raw amino-acid sequence, 308 residues long: Transcriptional adapter 1-2 (308 aa).

The protein belongs to the TADA1 family. As to quaternary structure, component of the Spt-Ada-Gcn5 acetyltransferase (SAGA) complex consisting of wda/Taf5L, Saf6, Taf9, Taf10b, Taf12, Ada1, Spt3, Spt7, Spt20, Sf3b3, Sf3b5, Nipped-A/Tra1, a histone acetyltransferase (HAT) module made up of Gcn5, Ada2b (Isoform B), Ada3 and Sgf29, and a deubiquitinase (DUB) module made up of not/nonstop, Sgf11 and e(y)2 tethered to SAGA by Atxn7. Not a component of the Ada2a-containing ATAC complex.

Its subcellular location is the nucleus. Functionally, component of the transcription regulatory complex SAGA, a multiprotein complex that activates transcription by remodeling chromatin and mediating histone acetylation and deubiquitination. The SAGA complex predominantly acetylates histone H3. The sequence is that of Transcriptional adapter 1-2 from Drosophila melanogaster (Fruit fly).